The following is a 129-amino-acid chain: Small ribosomal subunit protein uS11 (129 aa).

It belongs to the universal ribosomal protein uS11 family. Part of the 30S ribosomal subunit. Interacts with proteins S7 and S18. Binds to IF-3.

Functionally, located on the platform of the 30S subunit, it bridges several disparate RNA helices of the 16S rRNA. Forms part of the Shine-Dalgarno cleft in the 70S ribosome. The protein is Small ribosomal subunit protein uS11 of Serratia proteamaculans (strain 568).